The following is a 393-amino-acid chain: ATP phosphoribosyltransferase regulatory subunit (393 aa).

This sequence belongs to the class-II aminoacyl-tRNA synthetase family. HisZ subfamily. Heteromultimer composed of HisG and HisZ subunits.

It is found in the cytoplasm. Its pathway is amino-acid biosynthesis; L-histidine biosynthesis; L-histidine from 5-phospho-alpha-D-ribose 1-diphosphate: step 1/9. Required for the first step of histidine biosynthesis. May allow the feedback regulation of ATP phosphoribosyltransferase activity by histidine. The chain is ATP phosphoribosyltransferase regulatory subunit from Synechococcus sp. (strain RCC307).